The chain runs to 279 residues: Phosphate-binding protein PstS (279 aa).

The N-terminal stretch at 1–18 is a signal peptide; that stretch reads MKKVIILIFMLSTSLLYN. A lipid anchor (N-palmitoyl cysteine) is attached at C19. C19 carries the S-diacylglycerol cysteine lipid modification. Phosphate-binding positions include 33 to 35, S63, and 151 to 153; these read STT and SGS.

The protein belongs to the PstS family. Monomer (in vitro). The complex is composed of two ATP-binding proteins (PstB), two transmembrane proteins (PstC and PstA) and a solute-binding protein (PstS).

The protein resides in the cell membrane. Its function is as follows. Binds inorganic phosphate with a Kd of 1.2 uM. Part of the ABC transporter complex PstSACB involved in phosphate import. The sequence is that of Phosphate-binding protein PstS from Borreliella burgdorferi (strain ATCC 35210 / DSM 4680 / CIP 102532 / B31) (Borrelia burgdorferi).